We begin with the raw amino-acid sequence, 466 residues long: Neuraminidase (466 aa).

Topologically, residues 1-8 are intravirion; that stretch reads MLPSTVQT. Residues 9–31 form a helical membrane-spanning segment; it reads LTLLLTSGGVLLSLYVSASLSYL. An involved in apical transport and lipid raft association region spans residues 13-35; that stretch reads LTSGGVLLSLYVSASLSYLLYSD. The Virion surface portion of the chain corresponds to 32 to 466; that stretch reads LYSDVLLKFS…DTVTGVDMAL (435 aa). The hypervariable stalk region stretch occupies residues 38 to 86; sequence LKFSSTKTTAPTMSLECTNASNAQTVNHSATKEMTFPPPEPEWTYPRLS. N-linked (GlcNAc...) asparagine; by host glycans are attached at residues Asn-56 and Asn-64. Cystine bridges form between Cys-87-Cys-420, Cys-122-Cys-127, Cys-182-Cys-229, Cys-231-Cys-236, Cys-277-Cys-291, Cys-279-Cys-289, Cys-318-Cys-337, and Cys-424-Cys-447. The head of neuraminidase stretch occupies residues 89-466; sequence GSTFQKALLI…DTVTGVDMAL (378 aa). Arg-116 serves as a coordination point for substrate. A glycan (N-linked (GlcNAc...) asparagine; by host) is linked at Asn-144. The active-site Proton donor/acceptor is Asp-149. Substrate is bound at residue Arg-150. 275-276 is a substrate binding site; the sequence is EE. N-linked (GlcNAc...) asparagine; by host glycosylation is present at Asn-284. Residue Arg-292 coordinates substrate. Ca(2+)-binding residues include Asp-293, Thr-297, Asp-324, and Gly-346. Arg-374 contributes to the substrate binding site. Tyr-409 functions as the Nucleophile in the catalytic mechanism.

Belongs to the glycosyl hydrolase 34 family. As to quaternary structure, homotetramer. Ca(2+) is required as a cofactor. N-glycosylated.

Its subcellular location is the virion membrane. The protein localises to the host apical cell membrane. It carries out the reaction Hydrolysis of alpha-(2-&gt;3)-, alpha-(2-&gt;6)-, alpha-(2-&gt;8)- glycosidic linkages of terminal sialic acid residues in oligosaccharides, glycoproteins, glycolipids, colominic acid and synthetic substrates.. With respect to regulation, inhibited by the neuraminidase inhibitors zanamivir (Relenza) and oseltamivir (Tamiflu). These drugs interfere with the release of progeny virus from infected cells and are effective against all influenza strains. Resistance to neuraminidase inhibitors is quite rare. In terms of biological role, catalyzes the removal of terminal sialic acid residues from viral and cellular glycoconjugates. Cleaves off the terminal sialic acids on the glycosylated HA during virus budding to facilitate virus release. Additionally helps virus spread through the circulation by further removing sialic acids from the cell surface. These cleavages prevent self-aggregation and ensure the efficient spread of the progeny virus from cell to cell. Otherwise, infection would be limited to one round of replication. Described as a receptor-destroying enzyme because it cleaves a terminal sialic acid from the cellular receptors. May facilitate viral invasion of the upper airways by cleaving the sialic acid moieties on the mucin of the airway epithelial cells. Likely to plays a role in the budding process through its association with lipid rafts during intracellular transport. May additionally display a raft-association independent effect on budding. Plays a role in the determination of host range restriction on replication and virulence. Sialidase activity in late endosome/lysosome traffic seems to enhance virus replication. The sequence is that of Neuraminidase from Influenza B virus (strain B/Lee/1940).